We begin with the raw amino-acid sequence, 101 residues long: Small ribosomal subunit protein uS14 (101 aa).

Belongs to the universal ribosomal protein uS14 family. Part of the 30S ribosomal subunit. Contacts proteins S3 and S10.

In terms of biological role, binds 16S rRNA, required for the assembly of 30S particles and may also be responsible for determining the conformation of the 16S rRNA at the A site. The protein is Small ribosomal subunit protein uS14 of Bartonella quintana (strain Toulouse) (Rochalimaea quintana).